The sequence spans 201 residues: UPF0301 protein Arad_1256 (201 aa).

Belongs to the UPF0301 (AlgH) family.

In Rhizobium rhizogenes (strain K84 / ATCC BAA-868) (Agrobacterium radiobacter), this protein is UPF0301 protein Arad_1256.